A 438-amino-acid polypeptide reads, in one-letter code: UDP-N-acetylmuramoylalanine--D-glutamate ligase (438 aa).

Position 115-121 (115-121 (GSNGKST)) interacts with ATP.

The protein belongs to the MurCDEF family.

It localises to the cytoplasm. The catalysed reaction is UDP-N-acetyl-alpha-D-muramoyl-L-alanine + D-glutamate + ATP = UDP-N-acetyl-alpha-D-muramoyl-L-alanyl-D-glutamate + ADP + phosphate + H(+). The protein operates within cell wall biogenesis; peptidoglycan biosynthesis. Functionally, cell wall formation. Catalyzes the addition of glutamate to the nucleotide precursor UDP-N-acetylmuramoyl-L-alanine (UMA). The polypeptide is UDP-N-acetylmuramoylalanine--D-glutamate ligase (Vibrio atlanticus (strain LGP32) (Vibrio splendidus (strain Mel32))).